The sequence spans 222 residues: Bone marrow proteoglycan (222 aa).

An N-terminal signal peptide occupies residues 1-16 (MKLPLLLALLFGAVSA). A propeptide spans 17–105 (LHLRSETSTF…VKVVGIPGCQ (89 aa)) (acidic). O-linked (GalNAc...) threonine; partial glycosylation is present at Thr23. Residue Ser24 is glycosylated (O-linked (GalNAc...) serine). Thr25 is a glycosylation site (O-linked (GalNAc...) threonine). The segment at 25–75 (TFETPLGAKTLPEDEETPEQEMEETPCRELEEEEEWGSGSEDASKKDGAVE) is disordered. O-linked (GalNAc...) threonine; partial glycosylation occurs at Thr34. The segment covering 37–60 (EDEETPEQEMEETPCRELEEEEEW) has biased composition (acidic residues). Ser62 carries an O-linked (Xyl...) (chondroitin sulfate) serine glycan. N-linked (GlcNAc...) asparagine glycosylation occurs at Asn86. The C-type lectin domain occupies 104 to 222 (CQTCRYLLVR…LRRLPFICSY (119 aa)). 2 cysteine pairs are disulfide-bonded: Cys125–Cys220 and Cys197–Cys212.

In terms of assembly, in pregnancy serum, the proform exists as a disulfide-linked 2:2 heterotetramer with PAPPA, as a disulfide-linked 2:2 heterotetramer with AGT, and as a complex (probably a 2:2:2 heterohexamer) with AGT and C3dg. In terms of processing, nitrated. As to expression, detected in plasma and urine (at protein level). Detected in placenta (at protein level). High levels of the proform in placenta and pregnancy serum; in placenta, localized to X cells of septa and anchoring villi. Lower levels in a variety of other tissues including kidney, myometrium, endometrium, ovaries, breast, prostate, bone marrow and colon.

The protein localises to the secreted. It is found in the cytoplasmic vesicle. The protein resides in the secretory vesicle. Functionally, cytotoxin and helminthotoxin. Also induces non-cytolytic histamine release from human basophils. Involved in antiparasitic defense mechanisms and immune hypersensitivity reactions. The proform acts as a proteinase inhibitor, reducing the activity of PAPPA. The polypeptide is Bone marrow proteoglycan (PRG2) (Homo sapiens (Human)).